Here is a 460-residue protein sequence, read N- to C-terminus: Mitochondrial distribution and morphology protein 10 (460 aa).

It belongs to the MDM10 family. In terms of assembly, component of the ER-mitochondria encounter structure (ERMES) or MDM complex, composed of MMM1, MDM10, MDM12 and MDM34. Associates with the mitochondrial outer membrane sorting assembly machinery SAM(core) complex.

Its subcellular location is the mitochondrion outer membrane. Component of the ERMES/MDM complex, which serves as a molecular tether to connect the endoplasmic reticulum and mitochondria. Components of this complex are involved in the control of mitochondrial shape and protein biogenesis and may function in phospholipid exchange. MDM10 is involved in the late assembly steps of the general translocase of the mitochondrial outer membrane (TOM complex). Functions in the TOM40-specific route of the assembly of outer membrane beta-barrel proteins, including the association of TOM40 with the receptor TOM22 and small TOM proteins. Can associate with the SAM(core) complex as well as the MDM12-MMM1 complex, both involved in late steps of the major beta-barrel assembly pathway, that is responsible for biogenesis of all outer membrane beta-barrel proteins. May act as a switch that shuttles between both complexes and channels precursor proteins into the TOM40-specific pathway. Plays a role in mitochondrial morphology and in the inheritance of mitochondria. In Candida glabrata (strain ATCC 2001 / BCRC 20586 / JCM 3761 / NBRC 0622 / NRRL Y-65 / CBS 138) (Yeast), this protein is Mitochondrial distribution and morphology protein 10.